The sequence spans 352 residues: Dead end protein homolog 1 (352 aa).

RRM domains follow at residues 58-136 (SEVY…RSTE) and 138-218 (CELT…WLKP). Arginine 336 is subject to Omega-N-methylarginine.

As to quaternary structure, interacts with APOBEC3. Isoform 1 and isoform 2 are expressed in testis. Isoform 1 is expressed continuously in post natal (PN) testis although levels are low between PN1 to PN6. Isoform 2 is expressed from PN 20 onwards. Isoform 2 is strongly expressed in meiotic and in post-meiotic germ cells of the testis with highest expression at the elongated spermatid stage (at protein level). Expressed in testis and heart. Expressed in germ cells and genital ridges. Not detected in testicular tumors.

The protein resides in the nucleus. The protein localises to the cytoplasm. Its function is as follows. RNA-binding factor that positively regulates gene expression by prohibiting miRNA-mediated gene suppression. Relieves miRNA repression in germline cells. Prohibits the function of several miRNAs by blocking the accessibility of target mRNAs. Sequence-specific RNA-binding factor that binds specifically to U-rich regions (URRs) in the 3' untranslated region (3'-UTR) of several mRNAs. Does not bind to miRNAs. Isoform 1 may play a role during primordial germ cell (PGC) survival. However, does not seem to be essential for PGC migration. The sequence is that of Dead end protein homolog 1 (Dnd1) from Mus musculus (Mouse).